Consider the following 638-residue polypeptide: Stress-activated protein kinase alpha (638 aa).

ANK repeat units follow at residues 43 to 72, 80 to 109, 113 to 146, 150 to 181, 185 to 214, and 219 to 248; these read YGQS…TLKA, NGFS…NVDV, DLNT…NVNA, NGET…NVNL, FQES…DVDC, and ERKT…LFDW. The SAM domain maps to 240-303; that stretch reads KKYKDLFDWL…LKETSNLANE (64 aa). Residues 351–620 enclose the Protein kinase domain; the sequence is LEYTEKLGAG…RLVTIENEYR (270 aa). ATP contacts are provided by residues 357–365 and K378; that span reads LGAGSSGKV. The active-site Proton acceptor is the D472.

It belongs to the protein kinase superfamily. TKL Ser/Thr protein kinase family. As to quaternary structure, interacts with F-actin. Post-translationally, autophosphorylated.

The protein localises to the cytoplasm. Its subcellular location is the cytoskeleton. It catalyses the reaction L-seryl-[protein] + ATP = O-phospho-L-seryl-[protein] + ADP + H(+). The enzyme catalyses L-threonyl-[protein] + ATP = O-phospho-L-threonyl-[protein] + ADP + H(+). May be involved in cortical F-actin organization and resistance to osmotic stress. Activated upon cell detachment, in vitro. The sequence is that of Stress-activated protein kinase alpha (spkA-1) from Dictyostelium discoideum (Social amoeba).